Reading from the N-terminus, the 180-residue chain is NAD(P)H-quinone oxidoreductase subunit I, chloroplastic (180 aa).

2 4Fe-4S ferredoxin-type domains span residues 55 to 84 (GRIH…VDWK) and 95 to 124 (LNYS…MTEE). [4Fe-4S] cluster is bound by residues cysteine 64, cysteine 67, cysteine 70, cysteine 74, cysteine 104, cysteine 107, cysteine 110, and cysteine 114.

This sequence belongs to the complex I 23 kDa subunit family. NDH is composed of at least 16 different subunits, 5 of which are encoded in the nucleus. [4Fe-4S] cluster serves as cofactor.

The protein localises to the plastid. The protein resides in the chloroplast thylakoid membrane. The catalysed reaction is a plastoquinone + NADH + (n+1) H(+)(in) = a plastoquinol + NAD(+) + n H(+)(out). It catalyses the reaction a plastoquinone + NADPH + (n+1) H(+)(in) = a plastoquinol + NADP(+) + n H(+)(out). Its function is as follows. NDH shuttles electrons from NAD(P)H:plastoquinone, via FMN and iron-sulfur (Fe-S) centers, to quinones in the photosynthetic chain and possibly in a chloroplast respiratory chain. The immediate electron acceptor for the enzyme in this species is believed to be plastoquinone. Couples the redox reaction to proton translocation, and thus conserves the redox energy in a proton gradient. The chain is NAD(P)H-quinone oxidoreductase subunit I, chloroplastic from Ranunculus macranthus (Large buttercup).